The chain runs to 121 residues: Large ribosomal subunit protein bL19 (121 aa).

It belongs to the bacterial ribosomal protein bL19 family.

Its function is as follows. This protein is located at the 30S-50S ribosomal subunit interface and may play a role in the structure and function of the aminoacyl-tRNA binding site. The protein is Large ribosomal subunit protein bL19 of Chlamydia caviae (strain ATCC VR-813 / DSM 19441 / 03DC25 / GPIC) (Chlamydophila caviae).